Consider the following 86-residue polypeptide: Gas vesicle protein A1 (86 aa).

Belongs to the gas vesicle GvpA family. In terms of assembly, the gas vesicle shell is 2 nm thick and consists of a single layer of this protein. It forms helical ribs nearly perpendicular to the long axis of the vesicle.

It localises to the gas vesicle shell. Functionally, gas vesicles are hollow, gas filled proteinaceous nanostructures found in some microorganisms. During planktonic growth they allow positioning of the organism at a favorable depth for light or nutrient acquisition. GvpA forms the protein shell. Its function is as follows. It is not clear if the 2 type A proteins in this organism are functionally redundant. When the full gvp locus (gvpA1-gvpP-gvpQ-gvpA2-gvpR-gvpN-gvpF-gvpG-gvpL-gvpS-gvpK-gvpJ-gvpT-gvpU, called pNL26) is expressed in E.coli gas vesicles are made. In Priestia megaterium (Bacillus megaterium), this protein is Gas vesicle protein A1.